A 226-amino-acid polypeptide reads, in one-letter code: 26S proteasome non-ATPase regulatory subunit 10 (226 aa).

Residues 1–37 (MEGCVSNLMVCNLAYSGKLEELKESILADKSLATRTD) are required for nuclear localization. Residues 1 to 71 (MEGCVSNLMV…LGVPVNDKDD (71 aa)) are interaction with RB1. ANK repeat units follow at residues 3–36 (GCVS…ATRT), 37–69 (DQDS…VNDK), 70–102 (DDAG…VNAV), 103–135 (NQNG…PDAK), 136–168 (DHYE…TNIQ), 169–201 (DTEG…IYIE), and 202–226 (NKEE…MVEG). Positions 39–226 (DSRTALHWAC…GLILKRMVEG (188 aa)) are interaction with RELA. An interaction with RB1 region spans residues 171–226 (EGNTPLHLACDEERVEEAKLLVSQGASIYIENKEEKTPLQVAKGGLGLILKRMVEG).

Part of transient complex containing PSMD10, PSMC4, PSMC5 and PAAF1 formed during the assembly of the 26S proteasome. Stays associated throughout the assembly of the PA700/19S RC and is released upon association with the 20S core. Interacts with PSMC4. Interacts with RB1. Interacts with CDK4. Interacts with MDM2. Interacts with RELA. Associates with a CDK4:CCND2 serine/threonine kinase complex. Interacts with ARHGDIA and increases the interaction between ARHGDIA and RHOA, hence promotes ARHGDIA inactivation of RHOA and ROCK. As to expression, tends to be up-regulated in cancer cells with RAS mutations, including lung cancers and adenocarconimas (at protein level).

It localises to the cytoplasm. The protein resides in the nucleus. In terms of biological role, acts as a chaperone during the assembly of the 26S proteasome, specifically of the PA700/19S regulatory complex (RC). In the initial step of the base subcomplex assembly is part of an intermediate PSMD10:PSMC4:PSMC5:PAAF1 module which probably assembles with a PSMD5:PSMC2:PSMC1:PSMD2 module. Independently of the proteasome, regulates EGF-induced AKT activation through inhibition of the RHOA/ROCK/PTEN pathway, leading to prolonged AKT activation. Plays an important role in RAS-induced tumorigenesis. Its function is as follows. Acts as an proto-oncoprotein by being involved in negative regulation of tumor suppressors RB1 and p53/TP53. Overexpression is leading to phosphorylation of RB1 and proteasomal degradation of RB1. Regulates CDK4-mediated phosphorylation of RB1 by competing with CDKN2A for binding with CDK4. Facilitates binding of MDM2 to p53/TP53 and the mono- and polyubiquitination of p53/TP53 by MDM2 suggesting a function in targeting the TP53:MDM2 complex to the 26S proteasome. Involved in p53-independent apoptosis. Involved in regulation of NF-kappa-B by retaining it in the cytoplasm. Binds to the NF-kappa-B component RELA and accelerates its XPO1/CRM1-mediated nuclear export. The protein is 26S proteasome non-ATPase regulatory subunit 10 (PSMD10) of Homo sapiens (Human).